We begin with the raw amino-acid sequence, 736 residues long: Catalase-peroxidase (736 aa).

The interval 1 to 25 is disordered; sequence MSENGKCPVTGKTSKPVAGGGTSNQ. The segment at residues 96 to 224 is a cross-link (tryptophyl-tyrosyl-methioninium (Trp-Tyr) (with M-250)); the sequence is WHSAGTYRMG…LAAVQMGLIY (129 aa). His-97 (proton acceptor) is an active-site residue. Positions 224-250 form a cross-link, tryptophyl-tyrosyl-methioninium (Tyr-Met) (with W-96); sequence YVNPEGPDGNPDPIASGKDVRETFARM. A heme b-binding site is contributed by His-265. The disordered stretch occupies residues 294–313; sequence GWKSSHGRGKGGDTISSGIE.

The protein belongs to the peroxidase family. Peroxidase/catalase subfamily. In terms of assembly, homodimer or homotetramer. Heme b serves as cofactor. Formation of the three residue Trp-Tyr-Met cross-link is important for the catalase, but not the peroxidase activity of the enzyme.

It carries out the reaction H2O2 + AH2 = A + 2 H2O. It catalyses the reaction 2 H2O2 = O2 + 2 H2O. Functionally, bifunctional enzyme with both catalase and broad-spectrum peroxidase activity. The polypeptide is Catalase-peroxidase (Desulfatibacillum aliphaticivorans).